A 201-amino-acid polypeptide reads, in one-letter code: MAKRVTGPEIEKLIQLLAKVPGLGPRSARRAALHLIKKKDQLLGPLSHAMGEAYDKVKICSRCGNVDTVDPCIVCTDVQRDQSVIIVVEDVSDLWALERAGAMNAAYHVLGGTLSPLDGVGPDDLNIRGLIDRVGEGGIRELIIAVNATVEGQTTAHYITDQLQGLDVKITRLAHGVPVGGELDYLDEGTLAAALRARTVI.

The C4-type zinc-finger motif lies at 60–75 (CSRCGNVDTVDPCIVC). Residues 83 to 178 (SVIIVVEDVS…KITRLAHGVP (96 aa)) form the Toprim domain.

It belongs to the RecR family.

Its function is as follows. May play a role in DNA repair. It seems to be involved in an RecBC-independent recombinational process of DNA repair. It may act with RecF and RecO. This is Recombination protein RecR from Rhizobium johnstonii (strain DSM 114642 / LMG 32736 / 3841) (Rhizobium leguminosarum bv. viciae).